The sequence spans 558 residues: Ribonuclease Y (558 aa).

A helical transmembrane segment spans residues 3–23 (VLSILLILVAVGVGIFVGRQF). The KH domain maps to 248-311 (TTTTVELPSN…EIAKEALQRL (64 aa)). An HD domain is found at 374-467 (VLLHSKEVAY…VCAADALSAA (94 aa)).

Belongs to the RNase Y family.

The protein resides in the cell membrane. Endoribonuclease that initiates mRNA decay. The polypeptide is Ribonuclease Y (Aquifex aeolicus (strain VF5)).